The primary structure comprises 283 residues: Bifunctional protein FolD (283 aa).

Residues 165–167 and Ser190 contribute to the NADP(+) site; that span reads GAS.

The protein belongs to the tetrahydrofolate dehydrogenase/cyclohydrolase family. Homodimer.

It catalyses the reaction (6R)-5,10-methylene-5,6,7,8-tetrahydrofolate + NADP(+) = (6R)-5,10-methenyltetrahydrofolate + NADPH. It carries out the reaction (6R)-5,10-methenyltetrahydrofolate + H2O = (6R)-10-formyltetrahydrofolate + H(+). It participates in one-carbon metabolism; tetrahydrofolate interconversion. In terms of biological role, catalyzes the oxidation of 5,10-methylenetetrahydrofolate to 5,10-methenyltetrahydrofolate and then the hydrolysis of 5,10-methenyltetrahydrofolate to 10-formyltetrahydrofolate. The sequence is that of Bifunctional protein FolD from Cupriavidus necator (strain ATCC 17699 / DSM 428 / KCTC 22496 / NCIMB 10442 / H16 / Stanier 337) (Ralstonia eutropha).